The chain runs to 458 residues: Homogentisate 1,2-dioxygenase (458 aa).

His-308 (proton acceptor) is an active-site residue. Fe cation-binding residues include His-351 and Glu-357. Residues Tyr-366 and His-387 each contribute to the homogentisate site. His-387 is a binding site for Fe cation.

It belongs to the homogentisate dioxygenase family. In terms of assembly, hexamer; dimer of trimers. The cofactor is Fe cation.

It carries out the reaction homogentisate + O2 = 4-maleylacetoacetate + H(+). Its pathway is amino-acid degradation; L-phenylalanine degradation; acetoacetate and fumarate from L-phenylalanine: step 4/6. Its function is as follows. Involved in the catabolism of homogentisate (2,5-dihydroxyphenylacetate or 2,5-OH-PhAc), a central intermediate in the degradation of phenylalanine and tyrosine. Catalyzes the oxidative ring cleavage of the aromatic ring of homogentisate to yield maleylacetoacetate. The chain is Homogentisate 1,2-dioxygenase from Xanthomonas axonopodis pv. citri (strain 306).